The chain runs to 461 residues: Deoxyguanosinetriphosphate triphosphohydrolase-like protein (461 aa).

Residues 22 to 41 (ERFLPDPPREKDNRPPFRRD) are disordered. Positions 24-41 (FLPDPPREKDNRPPFRRD) are enriched in basic and acidic residues. Positions 72–285 (RLTHSLEVAQ…MELADDIAYG (214 aa)) constitute an HD domain.

It belongs to the dGTPase family. Type 2 subfamily.

The protein is Deoxyguanosinetriphosphate triphosphohydrolase-like protein of Haemophilus influenzae (strain PittGG).